We begin with the raw amino-acid sequence, 449 residues long: Glucose-6-phosphate isomerase (449 aa).

E291 acts as the Proton donor in catalysis. Catalysis depends on residues H312 and K426.

The protein belongs to the GPI family.

The protein localises to the cytoplasm. It carries out the reaction alpha-D-glucose 6-phosphate = beta-D-fructose 6-phosphate. Its pathway is carbohydrate biosynthesis; gluconeogenesis. It participates in carbohydrate degradation; glycolysis; D-glyceraldehyde 3-phosphate and glycerone phosphate from D-glucose: step 2/4. Its function is as follows. Catalyzes the reversible isomerization of glucose-6-phosphate to fructose-6-phosphate. The polypeptide is Glucose-6-phosphate isomerase (Streptococcus pneumoniae (strain CGSP14)).